The following is a 395-amino-acid chain: S-adenosylmethionine synthase (395 aa).

His-16 serves as a coordination point for ATP. Asp-18 is a Mg(2+) binding site. Residue Glu-44 participates in K(+) binding. L-methionine-binding residues include Glu-57 and Gln-100. Residues 100 to 110 are flexible loop; sequence QSPDIAQGVDD. ATP contacts are provided by residues 174–176, 241–242, Asp-250, 256–257, Ala-273, and Lys-277; these read DAK, RF, and RK. Asp-250 contacts L-methionine. Lys-281 is a binding site for L-methionine.

It belongs to the AdoMet synthase family. As to quaternary structure, homotetramer; dimer of dimers. The cofactor is Mg(2+). Requires K(+) as cofactor.

It localises to the cytoplasm. It carries out the reaction L-methionine + ATP + H2O = S-adenosyl-L-methionine + phosphate + diphosphate. It participates in amino-acid biosynthesis; S-adenosyl-L-methionine biosynthesis; S-adenosyl-L-methionine from L-methionine: step 1/1. Catalyzes the formation of S-adenosylmethionine (AdoMet) from methionine and ATP. The overall synthetic reaction is composed of two sequential steps, AdoMet formation and the subsequent tripolyphosphate hydrolysis which occurs prior to release of AdoMet from the enzyme. This chain is S-adenosylmethionine synthase, found in Levilactobacillus brevis (strain ATCC 367 / BCRC 12310 / CIP 105137 / JCM 1170 / LMG 11437 / NCIMB 947 / NCTC 947) (Lactobacillus brevis).